A 245-amino-acid chain; its full sequence is 1-(5-phosphoribosyl)-5-[(5-phosphoribosylamino)methylideneamino] imidazole-4-carboxamide isomerase (245 aa).

Asp7 acts as the Proton acceptor in catalysis. Catalysis depends on Asp129, which acts as the Proton donor.

The protein belongs to the HisA/HisF family.

It localises to the cytoplasm. The enzyme catalyses 1-(5-phospho-beta-D-ribosyl)-5-[(5-phospho-beta-D-ribosylamino)methylideneamino]imidazole-4-carboxamide = 5-[(5-phospho-1-deoxy-D-ribulos-1-ylimino)methylamino]-1-(5-phospho-beta-D-ribosyl)imidazole-4-carboxamide. The protein operates within amino-acid biosynthesis; L-histidine biosynthesis; L-histidine from 5-phospho-alpha-D-ribose 1-diphosphate: step 4/9. This chain is 1-(5-phosphoribosyl)-5-[(5-phosphoribosylamino)methylideneamino] imidazole-4-carboxamide isomerase, found in Shewanella amazonensis (strain ATCC BAA-1098 / SB2B).